The sequence spans 272 residues: HMP-PP phosphatase (272 aa).

Asp-8 serves as the catalytic Nucleophile. Asp-8, Asp-10, and Asp-212 together coordinate Mg(2+).

Belongs to the HAD-like hydrolase superfamily. Cof family. It depends on Mg(2+) as a cofactor.

It catalyses the reaction 4-amino-2-methyl-5-(diphosphooxymethyl)pyrimidine + H2O = 4-amino-2-methyl-5-(phosphooxymethyl)pyrimidine + phosphate + H(+). Its function is as follows. Catalyzes the hydrolysis of 4-amino-2-methyl-5-hydroxymethylpyrimidine pyrophosphate (HMP-PP) to 4-amino-2-methyl-5-hydroxymethylpyrimidine phosphate (HMP-P). This is HMP-PP phosphatase from Cronobacter sakazakii (strain ATCC BAA-894) (Enterobacter sakazakii).